A 323-amino-acid chain; its full sequence is Arginase-1 (323 aa).

A disordered region spans residues 1 to 27 (MSSKPKPIEIIGAPFSKGQPRGGVEKG). An N6-succinyllysine modification is found at Lys-17. A phosphoserine mark is found at Ser-62 and Ser-72. Lys-75 bears the N6-succinyllysine mark. Residues His-101, Asp-124, His-126, and Asp-128 each coordinate Mn(2+). Residues 126 to 130 (HTDIN) and 137 to 139 (SGN) each bind substrate. Ser-163 is modified (phosphoserine). Asp-183 provides a ligand contact to substrate. Position 217 is a phosphoserine (Ser-217). Mn(2+) is bound by residues Asp-232 and Asp-234. Positions 246 and 277 each coordinate substrate. The residue at position 281 (Thr-281) is a Phosphothreonine.

This sequence belongs to the arginase family. Homotrimer. Interacts with CMTM6. Requires Mn(2+) as cofactor. In terms of tissue distribution, detected in liver (at protein level).

The protein localises to the cytoplasm. It is found in the cytoplasmic granule. The catalysed reaction is L-arginine + H2O = urea + L-ornithine. The protein operates within nitrogen metabolism; urea cycle; L-ornithine and urea from L-arginine: step 1/1. Its activity is regulated as follows. Inactivated by diethyl pyrocarbonate (DEPC). Key element of the urea cycle converting L-arginine to urea and L-ornithine, which is further metabolized into metabolites proline and polyamides that drive collagen synthesis and bioenergetic pathways critical for cell proliferation, respectively; the urea cycle takes place primarily in the liver and, to a lesser extent, in the kidneys. Functionally, functions in L-arginine homeostasis in nonhepatic tissues characterized by the competition between nitric oxide synthase (NOS) and arginase for the available intracellular substrate arginine. Arginine metabolism is a critical regulator of innate and adaptive immune responses. Involved in an antimicrobial effector pathway in polymorphonuclear granulocytes (PMN). Upon PMN cell death is liberated from the phagolysosome and depletes arginine in the microenvironment leading to suppressed T cell and natural killer (NK) cell proliferation and cytokine secretion. In group 2 innate lymphoid cells (ILC2s) promotes acute type 2 inflammation in the lung and is involved in optimal ILC2 proliferation but not survival. Plays a role in the immune response of alternatively activated or M2 macrophages in processes such as wound healing and tissue regeneration, immune defense against multicellular pathogens and parasites, and immune suppression and allergic inflammation; the regulatory outcome seems to be organ specific. In tumor-infiltrating dendritic cells (DCs) and myeloid-derived suppressor cells (MDSCs) plays a role in suppression of T cell-mediated antitumor immunity. The chain is Arginase-1 (Arg1) from Rattus norvegicus (Rat).